Consider the following 334-residue polypeptide: H-2 class I histocompatibility antigen, Q7 alpha chain (334 aa).

The first 21 residues, Met1–Ala21, serve as a signal peptide directing secretion. The interval Gly22–Gly111 is alpha-1. At Gly22–Thr310 the chain is on the extracellular side. N-linked (GlcNAc...) asparagine glycosylation occurs at Asn107. Residues Gly112–Thr203 are alpha-2. Cystine bridges form between Cys122–Cys185 and Cys224–Cys280. Residues Asp204 to Trp295 form an alpha-3 region. The Ig-like C1-type domain maps to Pro206–Arg294. N-linked (GlcNAc...) asparagine glycosylation is present at Asn277. The connecting peptide stretch occupies residues Gly296–Thr310. The helical transmembrane segment at Ile311–Asn332 threads the bilayer.

Belongs to the MHC class I family. As to quaternary structure, heterodimer of an alpha chain and a beta chain (beta-2-microglobulin).

It is found in the membrane. Its function is as follows. Involved in the presentation of foreign antigens to the immune system. The sequence is that of H-2 class I histocompatibility antigen, Q7 alpha chain (H2-Q7) from Mus musculus (Mouse).